Consider the following 311-residue polypeptide: Methionyl-tRNA formyltransferase (311 aa).

The disordered stretch occupies residues 33-52 (RPDRPAGRGRHQRSSPVREL). 110–113 (SLLP) contacts (6S)-5,6,7,8-tetrahydrofolate.

The protein belongs to the Fmt family.

The enzyme catalyses L-methionyl-tRNA(fMet) + (6R)-10-formyltetrahydrofolate = N-formyl-L-methionyl-tRNA(fMet) + (6S)-5,6,7,8-tetrahydrofolate + H(+). Functionally, attaches a formyl group to the free amino group of methionyl-tRNA(fMet). The formyl group appears to play a dual role in the initiator identity of N-formylmethionyl-tRNA by promoting its recognition by IF2 and preventing the misappropriation of this tRNA by the elongation apparatus. This Parafrankia sp. (strain EAN1pec) protein is Methionyl-tRNA formyltransferase.